We begin with the raw amino-acid sequence, 66 residues long: KEGYLVNHSTGCKYECYKLGDNDYCLRECKQQYGKGAGGYCYAFGCWCTHLYEQAVVWPLPKKTCN.

Residues 1 to 66 enclose the LCN-type CS-alpha/beta domain; that stretch reads KEGYLVNHST…VWPLPKKTCN (66 aa). Cystine bridges form between Cys-12/Cys-65, Cys-16/Cys-41, Cys-25/Cys-46, and Cys-29/Cys-48. Asn-66 is modified (asparagine amide).

This sequence belongs to the long (4 C-C) scorpion toxin superfamily. Sodium channel inhibitor family. Beta subfamily. Expressed by the venom gland.

The protein resides in the secreted. Its function is as follows. Beta toxins bind voltage-independently at site-4 of sodium channels and shift the voltage of activation toward more negative potentials thereby affecting sodium channel activation and promoting spontaneous and repetitive firing. Is active on the human voltage-gated sodium channel Nav1.6/SCN8A when tested at 200 nM. In vivo, is toxic to mice when intraperitoneally injected. In Centruroides bonito (Scorpion), this protein is Beta-toxin Cbo1.